Here is a 338-residue protein sequence, read N- to C-terminus: MIREAIARVSSGTDLTPAEAGGVMAEIMHGAATPAQIGGFLTALRMKGETVAEIAAFARAMRAAAVPVALPAPGARVDTCGTGGDGAGTFNISTAAAFVAAGAGVPVVKHGNRGVSSRCGSADVLEALGVSVAIPPDRVGEVLAAAGIAFLFAPAYHPAMQYARIARQEIGIRTVFNLLGPLTNPAGAGAHLLGVYDPCLTLPVARVLGDLGAERAMVVHGAGLDEIATAGPTTVAELRGGEVTTYTLDCTEFGVPRSSVAALRGGGPEENAATLLAVLAGEEGPARDIVLLNAGAAIYLGGKADGIAGGIAHAEASLDSGAALDRLRRLVEATGGAA.

Residues G81, 84–85 (GD), T89, 91–94 (NIST), 109–117 (KHGNRGVSS), and S121 contribute to the 5-phospho-alpha-D-ribose 1-diphosphate site. Position 81 (G81) interacts with anthranilate. S93 contacts Mg(2+). N112 contacts anthranilate. R167 provides a ligand contact to anthranilate. Residues D225 and E226 each contribute to the Mg(2+) site.

It belongs to the anthranilate phosphoribosyltransferase family. Homodimer. Requires Mg(2+) as cofactor.

It catalyses the reaction N-(5-phospho-beta-D-ribosyl)anthranilate + diphosphate = 5-phospho-alpha-D-ribose 1-diphosphate + anthranilate. It functions in the pathway amino-acid biosynthesis; L-tryptophan biosynthesis; L-tryptophan from chorismate: step 2/5. Its function is as follows. Catalyzes the transfer of the phosphoribosyl group of 5-phosphorylribose-1-pyrophosphate (PRPP) to anthranilate to yield N-(5'-phosphoribosyl)-anthranilate (PRA). This Methanoculleus marisnigri (strain ATCC 35101 / DSM 1498 / JR1) protein is Anthranilate phosphoribosyltransferase.